The primary structure comprises 627 residues: MAWQGKLTDRTASIFQGKQMSLKLINIPRVKLSAAAFTKAFCHHKLIEVNATSVDSELLAPDIIHALQSSAWIQKNLQCLVLDSVSIPPNSGLVALSHFTGLHTLSVANVSFCNEDLVSVSQLPNLGSLDISNTLVTNISALLSCKNRLRSLTMHYLKCLAMNSPQVLAVIRQLKCLLHLDISDHQQLRSDLAFYLLQQKDILPNLTSLDISGGTDVTDQAVESFLQHRPAMRFVGLLYTDAGYSDFFTAKQGLKVAGGANMSQISEALSRYRNRSCFVKEALFRLFTETLSLRAVLPVMLKLVAIGMRNHPLDLPVQFTASACALNLTRQELARGMPVRLLAEITDLLFKATKNFPYYQQLQKNCLLSLTSSRILMDVPFDRFDAAKLALRWVCRRESPKLRTMAVSITSILALKLSPEEMGQLQEELIMAIKELLTIIRQKLAENLDDVTFLFTLKALWNLTDECPLACKYFMENEGLATVIRVLETFSISVIQSKVLGLLNNVAEVRELSSKLVTEDVIERIISLLHSSNLEVSFLAAGVLAHLTCDRQHWLSRDLQRTDLLRYLHLAIQNWPSSRCDMSVLVTYRSFKAFSPLLVNFSQPEVQRWALWAIHHVCSKNPRPKDV.

LRR repeat units lie at residues 123-146 (LPNLGSLDISNTLVTNISALLSCK), 203-227 (LPNLTSLDISGGTDVTDQAVESFLQ), and 409-432 (ITSILALKLSPEEMGQLQEELIMA).

This sequence belongs to the zyg-11 family.

Probably acts as a target recruitment subunit in an E3 ubiquitin ligase complex ZYGA-CUL2-elongin BC. The chain is Protein zyg-11 homolog A (Zyg11a) from Mus musculus (Mouse).